Consider the following 101-residue polypeptide: Protein translation factor SUI1 homolog (101 aa).

The protein belongs to the SUI1 family.

This is Protein translation factor SUI1 homolog from Methanothermobacter thermautotrophicus (strain ATCC 29096 / DSM 1053 / JCM 10044 / NBRC 100330 / Delta H) (Methanobacterium thermoautotrophicum).